The primary structure comprises 245 residues: 8-amino-3,8-dideoxy-manno-octulosonate cytidylyltransferase (245 aa).

This sequence belongs to the KdsB family.

The protein localises to the cytoplasm. The catalysed reaction is 8-amino-3,8-dideoxy-alpha-D-manno-octulosonate + CTP = CMP-8-amino-3,8-dideoxy-alpha-D-manno-oct-2-ulosonate + diphosphate. The protein operates within bacterial outer membrane biogenesis; lipopolysaccharide biosynthesis. Its function is as follows. Activates KDO8N (a required 8-carbon sugar) for incorporation into bacterial lipopolysaccharide in the Shewanella genus. The sequence is that of 8-amino-3,8-dideoxy-manno-octulosonate cytidylyltransferase from Shewanella baltica (strain OS223).